Reading from the N-terminus, the 654-residue chain is Acetyl-coenzyme A synthetase (654 aa).

Residues 196 to 199 and T316 contribute to the CoA site; that span reads RGGK. ATP is bound by residues 392–394, 416–421, D507, and R522; these read GEP and DTWWQT. CoA is bound at residue S530. R533 contacts ATP. Residues V544 and V549 each coordinate Mg(2+). Position 619 is an N6-acetyllysine (K619).

This sequence belongs to the ATP-dependent AMP-binding enzyme family. It depends on Mg(2+) as a cofactor. Post-translationally, acetylated. Deacetylation by the SIR2-homolog deacetylase activates the enzyme.

The catalysed reaction is acetate + ATP + CoA = acetyl-CoA + AMP + diphosphate. Catalyzes the conversion of acetate into acetyl-CoA (AcCoA), an essential intermediate at the junction of anabolic and catabolic pathways. AcsA undergoes a two-step reaction. In the first half reaction, AcsA combines acetate with ATP to form acetyl-adenylate (AcAMP) intermediate. In the second half reaction, it can then transfer the acetyl group from AcAMP to the sulfhydryl group of CoA, forming the product AcCoA. The chain is Acetyl-coenzyme A synthetase from Chromobacterium violaceum (strain ATCC 12472 / DSM 30191 / JCM 1249 / CCUG 213 / NBRC 12614 / NCIMB 9131 / NCTC 9757 / MK).